A 503-amino-acid chain; its full sequence is MEDPDILSNFLSITGCDDSSLATTILENNNWDVERSVDFFFTMNDPSNVKPTTSSKKTSSPPTASSSSASSEFDYNEDEFRDPIPQKMDKLVDHYYQPTQRSYQKQTNVFEAFRDFEKERGINQDKATEKQKSLSELFKPPLDILTFGTFDEIKKMAEQKKYFVLVNIQDVQEFDCQKLNRDTWSNKDLKELIGENFVFWQVNSANPEGKWFTQIYPVFKFPYIAIIDPRTGQKLQDMTGFIDAEEMAQYLVTFLSTNSFSGQIDPPPSSSSSGASKKQKKYNTEDEELELAIALSLKQEQERNSKSGSTSPLSQQQQQQQQQNNNNNNNNNSNNNNSTSTTTTTSTTTTKILGTNNKKDEKEDEDDVEEKDEDFEDDDEIEEDNYDDNYYYGETVQKEISEEEQKKVEIKQLVEKIQVTSKIGTEGDCIIQVRCPGGETLKGQFHSHDQIKNIYYYVQVKTGISNFKLFTSFPKLDLSGELMSKTLKELDLAPRAVLNMLQE.

Disordered regions lie at residues 47–80 (SNVKPTTSSKKTSSPPTASSSSASSEFDYNEDEF), 262–284 (GQIDPPPSSSSSGASKKQKKYNT), and 299–389 (QEQE…YDDN). Positions 50 to 71 (KPTTSSKKTSSPPTASSSSASS) are enriched in low complexity. The UIM domain occupies 284-303 (TEDEELELAIALSLKQEQER). Low complexity predominate over residues 314–350 (SQQQQQQQQQNNNNNNNNNSNNNNSTSTTTTTSTTTT). Residues 362-387 (KEDEDDVEEKDEDFEDDDEIEEDNYD) show a composition bias toward acidic residues. A UBX domain is found at 424 to 500 (GTEGDCIIQV…DLAPRAVLNM (77 aa)).

This chain is UBX domain-containing protein 7 homolog (ubxd7), found in Dictyostelium discoideum (Social amoeba).